A 75-amino-acid polypeptide reads, in one-letter code: uncharacterized protein (75 aa).

2 consecutive 4Fe-4S ferredoxin-type domains span residues 2-30 (SHTIVTEKCIGVAECVNACPVSCIHKGEG) and 37-68 (DWYWIDFAACIDCSICIQVCPTKGAILDKEEP). Positions 10 and 16 each coordinate [3Fe-4S] cluster. Residues C20, C46, C49, and C52 each coordinate [4Fe-4S] cluster. A [3Fe-4S] cluster-binding site is contributed by C56.

[4Fe-4S] cluster is required as a cofactor. It depends on [3Fe-4S] cluster as a cofactor.

It localises to the plastid. Its subcellular location is the chloroplast. This is an uncharacterized protein from Porphyra purpurea (Red seaweed).